Reading from the N-terminus, the 329-residue chain is RING finger protein 225 (329 aa).

The tract at residues 1 to 55 (MPCPRPFWLRHSRAPQGSGPSSPGSLSAPRSPSRGEDQEEEEEEEGDGSPGSGPI) is disordered. A compositionally biased stretch (low complexity) spans 14-32 (APQGSGPSSPGSLSAPRSP). Over residues 37–47 (DQEEEEEEEGD) the composition is skewed to acidic residues. The RING-type zinc-finger motif lies at 64-112 (CLICVSSFDGVFKLPKRLDCGHVFCLECLARLSLATAGGGNAVACPVCR). A disordered region spans residues 122–181 (GLPALPTQSGLLPRDARAPPSRQGSVRFDRRRGLLYLRPPPPPPGPRKARAPPPPPPLRL). Residues 159–179 (RPPPPPPGPRKARAPPPPPPL) show a composition bias toward pro residues. A helical transmembrane segment spans residues 203 to 223 (ALAVLVAAGLVVSGVYIFFLI). The tract at residues 248–329 (FPPRPPPGSP…RGARRLWGSQ (82 aa)) is disordered. Over residues 281-293 (DALEPEAGPEDPA) the composition is skewed to acidic residues. Over residues 294-304 (EAERTLDRRSD) the composition is skewed to basic and acidic residues.

Its subcellular location is the membrane. The protein is RING finger protein 225 of Homo sapiens (Human).